The sequence spans 220 residues: NADH-quinone oxidoreductase subunit I (220 aa).

4Fe-4S ferredoxin-type domains are found at residues 71–102 and 112–141; these read LQRL…IITH and DSYT…MGNR. 8 residues coordinate [4Fe-4S] cluster: Cys82, Cys85, Cys88, Cys92, Cys121, Cys124, Cys127, and Cys131. Positions 187-220 are disordered; that stretch reads MQATPLDYVQEPSKEESKEETPTNPESNKGDENV. Basic and acidic residues predominate over residues 198–207; the sequence is PSKEESKEET.

Belongs to the complex I 23 kDa subunit family. In terms of assembly, NDH-1 is composed of 14 different subunits. Subunits NuoA, H, J, K, L, M, N constitute the membrane sector of the complex. It depends on [4Fe-4S] cluster as a cofactor.

Its subcellular location is the cell inner membrane. It catalyses the reaction a quinone + NADH + 5 H(+)(in) = a quinol + NAD(+) + 4 H(+)(out). Its function is as follows. NDH-1 shuttles electrons from NADH, via FMN and iron-sulfur (Fe-S) centers, to quinones in the respiratory chain. The immediate electron acceptor for the enzyme in this species is believed to be ubiquinone. Couples the redox reaction to proton translocation (for every two electrons transferred, four hydrogen ions are translocated across the cytoplasmic membrane), and thus conserves the redox energy in a proton gradient. The protein is NADH-quinone oxidoreductase subunit I of Helicobacter pylori (strain HPAG1).